Reading from the N-terminus, the 79-residue chain is Dolichyl-diphosphooligosaccharide--protein glycosyltransferase subunit TMEM258 (79 aa).

The next 2 membrane-spanning stretches (helical) occupy residues 17-37 (VFPH…AWFF) and 55-75 (LISL…LLWV).

The protein belongs to the OST5 family. Component of the oligosaccharyltransferase (OST) complex.

It is found in the membrane. The protein resides in the endoplasmic reticulum. The protein localises to the cytoplasm. Its pathway is protein modification; protein glycosylation. Functionally, subunit of the oligosaccharyl transferase (OST) complex that catalyzes the initial transfer of a defined glycan (Glc(3)Man(9)GlcNAc(2) in eukaryotes) from the lipid carrier dolichol-pyrophosphate to an asparagine residue within an Asn-X-Ser/Thr consensus motif in nascent polypeptide chains, the first step in protein N-glycosylation. N-glycosylation occurs cotranslationally and the complex associates with the Sec61 complex at the channel-forming translocon complex that mediates protein translocation across the endoplasmic reticulum (ER). All subunits are required for a maximal enzyme activity. This is Dolichyl-diphosphooligosaccharide--protein glycosyltransferase subunit TMEM258 from Xenopus laevis (African clawed frog).